The sequence spans 93 residues: Consomatin G2 (93 aa).

The first 18 residues, 1 to 18 (MQTAYWVMLMMMVCITAP), serve as a signal peptide directing secretion. Residues 19-69 (LPEGGKPNSGIRGLVPNDLTPQHTLRSLISRRQTDVLLDATLLTTPAPEQR) constitute a propeptide that is removed on maturation. A disulfide bond links Cys-72 and Cys-77. Trp-74 carries the post-translational modification D-tryptophan. A propeptide spanning residues 79–93 (WRPYPWRRRDLNGKR) is cleaved from the precursor.

Belongs to the conotoxin C superfamily. Consomatin family. In terms of tissue distribution, expressed by the venom duct.

It is found in the secreted. Moderately activates human somatostatin receptors (SSTR) with a preferential activation of SSTR1 and SSTR4. In vivo, does not cause behavioral changes in mice within a few minutes of intracranial injection, but causes a progressive loss of movement thereafter. Four to five hours after injection, mice recover, even with the highest dose tested. Shows antinociception and antihyperalgesia activities in two mouse models of acute pain, most probably by acting outside the central nervous system. The sequence is that of Consomatin G2 from Conus geographus (Geography cone).